We begin with the raw amino-acid sequence, 407 residues long: MTAVIHPDIRPRINSVASDDLNAAERERIRAKSALFAPPEARLADGRRDLVGLSREELAALMTEIGEKPFRAKQLWHWIYHQGATDFSAMTTIAKPMQAKLAEHFVVSRPTTATEQTSVDETRKFLFRFRDGQEAETVYIPDRREDRGAVCISSQVGCTLSCTFCHTGTQKLVRNLGPAEIVGQFMAARDSYGEWPSPSADMPRYLSTIVLMGMGEPLYNYENVAKAMRIIMDGEGIALSRRRITLSTSGVVPMMDRCGDELGINLAISLHAVTNELRDQIVPLNRKYPIEELIAACRRYPAASNSRRITFEYIMLRGVNDSEADARELVRLIRDLPAKVNLIPFNPWPGSDFQPSTRQQLTKFANIVMDAGFASPIRTPRGQDILAACGQLKTESERQRRSATPEA.

The active-site Proton acceptor is the E136. The Radical SAM core domain occupies 144-378 (REDRGAVCIS…MDAGFASPIR (235 aa)). C151 and C389 are disulfide-bonded. The [4Fe-4S] cluster site is built by C158, C162, and C165. S-adenosyl-L-methionine contacts are provided by residues 215 to 216 (GE), S247, 269 to 271 (SLH), and N346. C389 functions as the S-methylcysteine intermediate in the catalytic mechanism.

The protein belongs to the radical SAM superfamily. RlmN family. Requires [4Fe-4S] cluster as cofactor.

It localises to the cytoplasm. The catalysed reaction is adenosine(2503) in 23S rRNA + 2 reduced [2Fe-2S]-[ferredoxin] + 2 S-adenosyl-L-methionine = 2-methyladenosine(2503) in 23S rRNA + 5'-deoxyadenosine + L-methionine + 2 oxidized [2Fe-2S]-[ferredoxin] + S-adenosyl-L-homocysteine. It catalyses the reaction adenosine(37) in tRNA + 2 reduced [2Fe-2S]-[ferredoxin] + 2 S-adenosyl-L-methionine = 2-methyladenosine(37) in tRNA + 5'-deoxyadenosine + L-methionine + 2 oxidized [2Fe-2S]-[ferredoxin] + S-adenosyl-L-homocysteine. Specifically methylates position 2 of adenine 2503 in 23S rRNA and position 2 of adenine 37 in tRNAs. m2A2503 modification seems to play a crucial role in the proofreading step occurring at the peptidyl transferase center and thus would serve to optimize ribosomal fidelity. The sequence is that of Dual-specificity RNA methyltransferase RlmN from Gluconobacter oxydans (strain 621H) (Gluconobacter suboxydans).